The chain runs to 356 residues: Replication factor C subunit 3 (356 aa).

Lysine 20 bears the N6-acetyllysine mark. Serine 125 carries the post-translational modification Phosphoserine.

It belongs to the activator 1 small subunits family. As to quaternary structure, subunit of the RFC complex, an heteropentameric complex consisting of a large subunit RFC1 and four small subunits RFC2, RFC3, RFC4 and RFC5; the RFC complex interacts with PCNA. Forms an heterotetrameric complex with RFC2, RFC4 and RFC5; this complex has ATPase activity but is not stimulated by PCNA. The heterotetramer of subunits RFC2, RFC3, RFC4 and RFC5 interacts with RAD17. Interacts with CNTD1; this interaction facilitates crossover formation.

It localises to the nucleus. Functionally, subunit of the replication factor C (RFC) complex which acts during elongation of primed DNA templates by DNA polymerases delta and epsilon, and is necessary for ATP-dependent loading of proliferating cell nuclear antigen (PCNA) onto primed DNA. In Mus musculus (Mouse), this protein is Replication factor C subunit 3 (Rfc3).